Here is a 103-residue protein sequence, read N- to C-terminus: Large ribosomal subunit protein bL21 (103 aa).

Belongs to the bacterial ribosomal protein bL21 family. As to quaternary structure, part of the 50S ribosomal subunit. Contacts protein L20.

This protein binds to 23S rRNA in the presence of protein L20. The sequence is that of Large ribosomal subunit protein bL21 from Klebsiella pneumoniae (strain 342).